The sequence spans 60 residues: MADVKITQVRSTIGARWKQRESLKTLGLRKIRQTVVREDNAQTRGLLQVVRHLVTVEDVK.

The protein belongs to the universal ribosomal protein uL30 family. In terms of assembly, part of the 50S ribosomal subunit.

This chain is Large ribosomal subunit protein uL30, found in Mycobacteroides abscessus (strain ATCC 19977 / DSM 44196 / CCUG 20993 / CIP 104536 / JCM 13569 / NCTC 13031 / TMC 1543 / L948) (Mycobacterium abscessus).